The sequence spans 120 residues: Large ribosomal subunit protein bL20 (120 aa).

This sequence belongs to the bacterial ribosomal protein bL20 family.

In terms of biological role, binds directly to 23S ribosomal RNA and is necessary for the in vitro assembly process of the 50S ribosomal subunit. It is not involved in the protein synthesizing functions of that subunit. In Methylobacillus flagellatus (strain ATCC 51484 / DSM 6875 / VKM B-1610 / KT), this protein is Large ribosomal subunit protein bL20.